The following is a 70-amino-acid chain: MTTIRLKENEPFEVAMRRFKRTIEKTGLLTDLRAREFYEKPTAERKRKLAAAVKRHYKRIRSQQLPKKLY.

It belongs to the bacterial ribosomal protein bS21 family.

The protein is Small ribosomal subunit protein bS21 of Herminiimonas arsenicoxydans.